Reading from the N-terminus, the 825-residue chain is Leucine-rich repeat and guanylate kinase domain-containing protein (825 aa).

The segment at 73 to 96 (DSDGDEDQGEGEAGSEESSESEML) is disordered. 9 LRR repeats span residues 129–149 (YLNLTLSGCNLIDVSILCGYV), 150–171 (HLQKLDLSANKIEDLSCVSCMP), 172–193 (YLLELNASQNNLTTFFNFKPPK), 194–215 (NLKKADFSHNQISEICDLSAYH), 216–237 (ALTKLILDGNEIEEISGLEMCN), 238–259 (NLIHLSLANNKITTINGLNKLP), 260–280 (IKILCLSNNQIEMITGLEDLK), 281–302 (ALQNLDLSHNQISSLQGLENHD), and 303–324 (LLEVINLEDNKIAELREIEYIK). The 39-residue stretch at 337-375 (NPIQEKSEYWFFVIFMLLRLTELDQKKIKVEEKVSAVNK) folds into the LRRCT domain. The region spanning 414 to 597 (YPMLILAGPE…AYQKLSQLIR (184 aa)) is the Guanylate kinase-like domain. An ATP-binding site is contributed by 421–428 (GPEACGKR). A disordered region spans residues 760 to 825 (PEGSISSHLG…TLPPIPQGRR (66 aa)). Over residues 763-774 (SISSHLGSGASD) the composition is skewed to polar residues. A compositionally biased stretch (pro residues) spans 816 to 825 (TLPPIPQGRR).

As to quaternary structure, interacts (via guanylate kinase-like domain) with RIMBP3 (via coiled-coil region). Interacts (via guanylate kinase-like domain) with HOOK2. Interacts (via LRRCT domain) with KLC3. Interacts with HOOK1 and HOOK3.

It localises to the cytoplasmic vesicle. Its subcellular location is the secretory vesicle. It is found in the acrosome. The protein resides in the cytoplasm. The protein localises to the cytoskeleton. It localises to the cilium basal body. Involved in multiple aspects of sperm assembly including acrosome attachment, shaping of the sperm head and in the early aspects of axoneme development. Not essential for primary cilium biogenesis. In Homo sapiens (Human), this protein is Leucine-rich repeat and guanylate kinase domain-containing protein (LRGUK).